The following is a 390-amino-acid chain: Anhydro-N-acetylmuramic acid kinase (390 aa).

9–16 (GTSLDGID) contributes to the ATP binding site.

Belongs to the anhydro-N-acetylmuramic acid kinase family.

The enzyme catalyses 1,6-anhydro-N-acetyl-beta-muramate + ATP + H2O = N-acetyl-D-muramate 6-phosphate + ADP + H(+). It functions in the pathway amino-sugar metabolism; 1,6-anhydro-N-acetylmuramate degradation. Its pathway is cell wall biogenesis; peptidoglycan recycling. Catalyzes the specific phosphorylation of 1,6-anhydro-N-acetylmuramic acid (anhMurNAc) with the simultaneous cleavage of the 1,6-anhydro ring, generating MurNAc-6-P. Is required for the utilization of anhMurNAc either imported from the medium or derived from its own cell wall murein, and thus plays a role in cell wall recycling. This Bacillus cereus (strain ATCC 14579 / DSM 31 / CCUG 7414 / JCM 2152 / NBRC 15305 / NCIMB 9373 / NCTC 2599 / NRRL B-3711) protein is Anhydro-N-acetylmuramic acid kinase.